A 256-amino-acid chain; its full sequence is Isoprenyl transferase 1 (256 aa).

D34 is an active-site residue. D34 is a Mg(2+) binding site. Residues 35–38, W39, H52, and 80–82 each bind substrate; these read GNRR and STE. Catalysis depends on N83, which acts as the Proton acceptor. Residues R86, R205, and 211 to 213 each bind substrate; that span reads RLS. E224 serves as a coordination point for Mg(2+).

Belongs to the UPP synthase family. Homodimer. Mg(2+) is required as a cofactor.

Functionally, catalyzes the condensation of isopentenyl diphosphate (IPP) with allylic pyrophosphates generating different type of terpenoids. This is Isoprenyl transferase 1 from Corynebacterium efficiens (strain DSM 44549 / YS-314 / AJ 12310 / JCM 11189 / NBRC 100395).